Here is a 209-residue protein sequence, read N- to C-terminus: MKLVVSCSSVQTIVDILDESEGENSISTLGQLRERIAADNDVDAETMKLLHRGKFLQGEADVSLSTINFKENDKIIVMGGKNAMADDAGFKMLMQYEKHNLSNLQKTYDVNLKDVADLERGFLEKPKQVEMGKKLEKKVKFFNEEAERHLETLDGMNIITDATPDNQAKRNREKRKTLINGIQTLLNQNDALLRRLEQYMSILNGDILE.

Positions 7–84 constitute a Ubiquitin-like domain; sequence CSSVQTIVDI…IIVMGGKNAM (78 aa). The 87-residue stretch at 107–193 folds into the BAG domain; it reads TYDVNLKDVA…TLLNQNDALL (87 aa).

Homodimer or homotetramer.

May inhibit the chaperone activity of HSP70/HSC70 by promoting substrate release in an ATP-dependent manner. This is BAG family molecular chaperone regulator 1 (bag-1) from Caenorhabditis briggsae.